We begin with the raw amino-acid sequence, 335 residues long: Trans-3-hydroxy-L-proline dehydratase (335 aa).

The Proton acceptor role is filled by Cys-91. Residues 92–93 (GH) and 256–257 (GS) contribute to the substrate site.

Belongs to the proline racemase family. Homodimer.

It carries out the reaction trans-3-hydroxy-L-proline = 1-pyrroline-2-carboxylate + H2O. Its pathway is amino-acid degradation. Functionally, catalyzes the dehydration of trans-3-hydroxy-L-proline (t3LHyp) to Delta(1)-pyrroline-2-carboxylate (Pyr2C). Together with LhpI, is involved in a t3LHyp degradation pathway to L-proline, which allows A.brasilense to grow on t3LHyp as a sole carbon source. The sequence is that of Trans-3-hydroxy-L-proline dehydratase from Azospirillum brasilense.